We begin with the raw amino-acid sequence, 132 residues long: MSRYQCPDCQYIYDENKGEPHEGFHPNTSWNDIPKDWACPDCAVRDKVDFIFLADSPSKETQLGVNSQLANSESGISDATPTGMAVLAAELVIPLNQENKNEGCAAKTEVLDQASTPQVVRKSSTRKKMRNK.

In terms of domain architecture, Rubredoxin-like spans 1–53; sequence MSRYQCPDCQYIYDENKGEPHEGFHPNTSWNDIPKDWACPDCAVRDKVDFIFL. Cysteine 6, cysteine 9, cysteine 39, and cysteine 42 together coordinate Fe cation. Positions 108–132 are disordered; sequence TEVLDQASTPQVVRKSSTRKKMRNK. The span at 113 to 122 shows a compositional bias: polar residues; sequence QASTPQVVRK. The segment covering 123 to 132 has biased composition (basic residues); that stretch reads SSTRKKMRNK.

The protein belongs to the rubredoxin family. The cofactor is Fe(3+).

The protein resides in the cytoplasm. The protein operates within hydrocarbon metabolism; alkane degradation. Its function is as follows. Not known. Probably involved in an electron transport pathway, but not required for the hydrocarbon hydroxylating system. Seems to be non-functional. The protein is Rubredoxin-1 (alkF) of Ectopseudomonas oleovorans (Pseudomonas oleovorans).